The primary structure comprises 150 residues: MNVILLDKIANLGNLGDQVSVKAGYARNFLLPQGKAVVANAANTEVFEARRADLEAKLAADLAAATQRAEKISALESVVIASKAGDEGKLFGSIGNRDIADAVTAAGVELAKSEVRLPLGAIRTTGEFEVEVQVHTEVKAIVKLSVVAEA.

Belongs to the bacterial ribosomal protein bL9 family.

In terms of biological role, binds to the 23S rRNA. The chain is Large ribosomal subunit protein bL9 from Shewanella halifaxensis (strain HAW-EB4).